Here is a 117-residue protein sequence, read N- to C-terminus: MTTNKTAKIQFYEGTDEPVVPEIRLTRSKDGTTGQALFLFEKPQALSSITDGEITGMRMIDSEGEILTREVKVKFVDGEPIFLEAVYIWKNTPDFDRFMRFANSYAKSNGLGYSEKK.

The protein belongs to the Psb28 family. In terms of assembly, part of the photosystem II complex.

The protein localises to the cellular thylakoid membrane. The sequence is that of Photosystem II reaction center Psb28 protein from Prochlorococcus marinus (strain MIT 9301).